A 236-amino-acid polypeptide reads, in one-letter code: 2-C-methyl-D-erythritol 4-phosphate cytidylyltransferase (236 aa).

It belongs to the IspD/TarI cytidylyltransferase family. IspD subfamily. In terms of assembly, homodimer.

The enzyme catalyses 2-C-methyl-D-erythritol 4-phosphate + CTP + H(+) = 4-CDP-2-C-methyl-D-erythritol + diphosphate. The protein operates within isoprenoid biosynthesis; isopentenyl diphosphate biosynthesis via DXP pathway; isopentenyl diphosphate from 1-deoxy-D-xylulose 5-phosphate: step 2/6. Catalyzes the formation of 4-diphosphocytidyl-2-C-methyl-D-erythritol from CTP and 2-C-methyl-D-erythritol 4-phosphate (MEP). This Salmonella heidelberg (strain SL476) protein is 2-C-methyl-D-erythritol 4-phosphate cytidylyltransferase.